Consider the following 892-residue polypeptide: Alpha-actinin-1 (892 aa).

M1 is subject to N-acetylmethionine. Residues 1–247 (MDHYDSQQTN…IMTYVSSFYH (247 aa)) form an actin-binding region. Residue S6 is modified to Phosphoserine. The residue at position 12 (Y12) is a Phosphotyrosine; by FAK1. Calponin-homology (CH) domains are found at residues 31–135 (KQQR…LRFA) and 144–250 (TSAK…HAFS). 2 positions are modified to N6-acetyllysine: K95 and K195. 4 Spectrin repeats span residues 274–384 (QLME…WLLN), 394–499 (HLAE…ALER), 509–620 (QLYL…ALTE), and 630–733 (RLRK…EVEN). The tract at residues 274 to 733 (QLMEDYEKLA…IARTINEVEN (460 aa)) is interaction with DDN. The residue at position 471 (S471) is a Phosphoserine. K676 carries the post-translational modification N6-acetyllysine. A Phosphoserine modification is found at S677. 2 consecutive EF-hand domains span residues 746–781 (EQMN…LGYD) and 787–822 (QGEA…ETAD). D759, D761, S763, T765, and E770 together coordinate Ca(2+). S890 is subject to Phosphoserine.

The protein belongs to the alpha-actinin family. In terms of assembly, homodimer; antiparallel. Interacts with MYOZ2, TTID and LPP. Interacts with DDN. Interacts with PSD. Interacts with MICALL2. Interacts with DNM2 and CTTN. Interacts with PDLIM1. Interacts with PDLIM2. Interacts with PDLIM4 (via PDZ domain). Interacts with IGSF8.

It is found in the cytoplasm. The protein resides in the cytoskeleton. The protein localises to the myofibril. Its subcellular location is the sarcomere. It localises to the z line. It is found in the cell membrane. The protein resides in the cell junction. The protein localises to the cell projection. Its subcellular location is the ruffle. In terms of biological role, F-actin cross-linking protein which is thought to anchor actin to a variety of intracellular structures. Association with IGSF8 regulates the immune synapse formation and is required for efficient T-cell activation. The polypeptide is Alpha-actinin-1 (Actn1) (Mus musculus (Mouse)).